A 500-amino-acid polypeptide reads, in one-letter code: Protein psiE (500 aa).

An N-terminal signal peptide occupies residues 1–18; that stretch reads MKLISVLITFLLATVIYS. An N-linked (GlcNAc...) asparagine glycan is attached at N59. Residues 114 to 256 form the PA14 domain; the sequence is TYDTTRKIYV…KDYCGVCQGD (143 aa). N-linked (GlcNAc...) asparagine glycosylation is found at N314, N341, N366, N420, and N469.

This sequence belongs to the prespore-cell-inducing factor family.

The protein localises to the secreted. The polypeptide is Protein psiE (psiE) (Dictyostelium discoideum (Social amoeba)).